The chain runs to 132 residues: Small ribosomal subunit protein uS8 (132 aa).

The protein belongs to the universal ribosomal protein uS8 family. As to quaternary structure, part of the 30S ribosomal subunit. Contacts proteins S5 and S12.

Its function is as follows. One of the primary rRNA binding proteins, it binds directly to 16S rRNA central domain where it helps coordinate assembly of the platform of the 30S subunit. The protein is Small ribosomal subunit protein uS8 of Mycobacterium bovis (strain ATCC BAA-935 / AF2122/97).